A 458-amino-acid chain; its full sequence is Mannan endo-1,6-alpha-mannosidase DFG5 (458 aa).

Positions 1–26 (MIVNISAKMILSICFTFLSFFKATHA) are cleaved as a signal peptide. N-linked (GlcNAc...) asparagine glycans are attached at residues Asn-89, Asn-114, Asn-138, Asn-208, Asn-231, Asn-245, Asn-270, Asn-273, and Asn-417. The interval 399 to 418 (PYKEDNGGTSKGDANAGMNS) is disordered. The GPI-anchor amidated glycine moiety is linked to residue Gly-437. Positions 438–458 (AAIITAVILSVLTGGAVWMLF) are cleaved as a propeptide — removed in mature form.

It belongs to the glycosyl hydrolase 76 family. N-glycosylated.

It localises to the cell membrane. It catalyses the reaction Random hydrolysis of (1-&gt;6)-alpha-D-mannosidic linkages in unbranched (1-&gt;6)-mannans.. Required for normal synthesis of the cell wall. The polypeptide is Mannan endo-1,6-alpha-mannosidase DFG5 (DFG5) (Saccharomyces cerevisiae (strain ATCC 204508 / S288c) (Baker's yeast)).